A 430-amino-acid polypeptide reads, in one-letter code: Adenylosuccinate synthetase (430 aa).

Residues Gly12–Lys18 and Gly40–Thr42 contribute to the GTP site. Asp13 serves as the catalytic Proton acceptor. Residues Asp13 and Gly40 each contribute to the Mg(2+) site. Residues Asp13 to Lys16, Asn38 to His41, Thr128, Arg142, Gln223, Thr238, and Arg302 each bind IMP. His41 acts as the Proton donor in catalysis. Thr298 to Arg304 lines the substrate pocket. GTP contacts are provided by residues Arg304, Ser330–Asp332, and Ser412–Gly414.

This sequence belongs to the adenylosuccinate synthetase family. In terms of assembly, homodimer. Mg(2+) serves as cofactor.

It is found in the cytoplasm. The catalysed reaction is IMP + L-aspartate + GTP = N(6)-(1,2-dicarboxyethyl)-AMP + GDP + phosphate + 2 H(+). Its pathway is purine metabolism; AMP biosynthesis via de novo pathway; AMP from IMP: step 1/2. Its function is as follows. Plays an important role in the de novo pathway of purine nucleotide biosynthesis. Catalyzes the first committed step in the biosynthesis of AMP from IMP. The chain is Adenylosuccinate synthetase from Streptococcus pyogenes serotype M2 (strain MGAS10270).